The chain runs to 185 residues: Small ribosomal subunit protein uS5 (185 aa).

The S5 DRBM domain maps to 18–81; that stretch reads FVDKLVHINR…ESAKRALIRV (64 aa). The interval 157–185 is disordered; that stretch reads SPRSVAARRGIKVSQLQSRRRVEDAEATD. Over residues 176-185 the composition is skewed to basic and acidic residues; that stretch reads RRVEDAEATD.

Belongs to the universal ribosomal protein uS5 family. In terms of assembly, part of the 30S ribosomal subunit. Contacts proteins S4 and S8.

Functionally, with S4 and S12 plays an important role in translational accuracy. In terms of biological role, located at the back of the 30S subunit body where it stabilizes the conformation of the head with respect to the body. The polypeptide is Small ribosomal subunit protein uS5 (Xanthobacter autotrophicus (strain ATCC BAA-1158 / Py2)).